The sequence spans 229 residues: Ribose-5-phosphate isomerase A (229 aa).

Residues 28 to 31 (TGST), 85 to 88 (DGAD), and 98 to 101 (KGRG) each bind substrate. Glutamate 107 serves as the catalytic Proton acceptor. Lysine 125 provides a ligand contact to substrate.

Belongs to the ribose 5-phosphate isomerase family. As to quaternary structure, homodimer.

The enzyme catalyses aldehydo-D-ribose 5-phosphate = D-ribulose 5-phosphate. Its pathway is carbohydrate degradation; pentose phosphate pathway; D-ribose 5-phosphate from D-ribulose 5-phosphate (non-oxidative stage): step 1/1. Its function is as follows. Catalyzes the reversible conversion of ribose-5-phosphate to ribulose 5-phosphate. In Thermococcus kodakarensis (strain ATCC BAA-918 / JCM 12380 / KOD1) (Pyrococcus kodakaraensis (strain KOD1)), this protein is Ribose-5-phosphate isomerase A.